We begin with the raw amino-acid sequence, 663 residues long: MDHRNLDPKTLKVSQLRRVLVENDVAFPANARKPVLVKLFEEKVRQRLQSSPEASKVRTSIQKVVKSGAKNADRKKTLKSKKLESSSSESKTVKDENVETNKRKREQISTDNEAKMQIQEEKSPKKKRKKRSSKANKPPESPPQSKSDGKATSADLTSELETVEELHKKDSSDDKPRVKELPKPELPNLKVSNEFLAQLNKELASAATENYDHSIKSTDLSSIRIETEEPVGPSTGAETRNESEVMENINLEVQPEVKEAKEELTKISETFDNQDEEDTSRLSSKKNIRSPKGRTRHFIANKTKRGIDIMKPFIAHLFIWLWNGAIFLSIICPILFGLWYREQRIQVGYCGHEKPLKSLAISAFPQTERVDSVLQAYRPNCLECPEHGICSSFMNVECEPGYEPKSSILETYGIIPFPKYCAKDESKEKEVDELVWKVNEYLKKKNAQHECGEGENLFESGETETKLYDIFSHSRPSWESQREFNDHWKNVLEILKKKDDIIWLPLDFETNGKREKSKSNNTNYIYRSTSKKWVTLQCHLEGDIQEYITKYGGSLFITLGVLFLIKKIQSTLDNYVQGEQIIEKLVKEAIDKLKDVKKNKGEEPFLTTVQLRATLLSDIPNIKEQNNLWAQTKEKIMKEQSENIELYLLEENGEIMTCWEWKE.

2 disordered regions span residues 46–188 and 267–289; these read QRLQ…ELPN and ISET…KNIR. Residues 47 to 62 are compositionally biased toward polar residues; that stretch reads RLQSSPEASKVRTSIQ. Over residues 91–123 the composition is skewed to basic and acidic residues; sequence KTVKDENVETNKRKREQISTDNEAKMQIQEEKS. Residue Ser123 is modified to Phosphoserine. The span at 124–134 shows a compositional bias: basic residues; it reads PKKKRKKRSSK. The Nuclear localization signal signature appears at 124 to 137; it reads PKKKRKKRSSKANK. Positions 164-183 are enriched in basic and acidic residues; the sequence is EELHKKDSSDDKPRVKELPK. Residues 317–337 form a helical membrane-spanning segment; sequence LFIWLWNGAIFLSIICPILFG.

In terms of assembly, interacts with SRP1.

It is found in the nucleus inner membrane. The polypeptide is Inner nuclear membrane protein HEH2 (HEH2) (Saccharomyces cerevisiae (strain ATCC 204508 / S288c) (Baker's yeast)).